Here is a 251-residue protein sequence, read N- to C-terminus: BRI3-binding protein (251 aa).

The next 4 helical transmembrane spans lie at Ala13–Gln33, Ala125–Phe145, Thr146–Phe166, and Val185–Trp205. Residues Asn217–Arg247 are a coiled coil. N6-acetyllysine is present on Lys229. Ser248 carries the post-translational modification Phosphoserine.

Interacts with LETMD1. Interacts with BRI3 (isoforms 1 and 2); the interaction with isoform 2 is weaker than with isoform 1. Interacts with BRI3; the interaction is weak. Interacts with TMEM238L. As to expression, most abundantly expressed in brain, liver and kidney. Overexpressed in leukemia and lymphoma cell lines, as well as in various carcinomas.

It localises to the mitochondrion outer membrane. Functionally, involved in tumorigenesis and may function by stabilizing p53/TP53. The polypeptide is BRI3-binding protein (Homo sapiens (Human)).